We begin with the raw amino-acid sequence, 80 residues long: Exodeoxyribonuclease 7 small subunit (80 aa).

The protein belongs to the XseB family. In terms of assembly, heterooligomer composed of large and small subunits.

The protein localises to the cytoplasm. The catalysed reaction is Exonucleolytic cleavage in either 5'- to 3'- or 3'- to 5'-direction to yield nucleoside 5'-phosphates.. Functionally, bidirectionally degrades single-stranded DNA into large acid-insoluble oligonucleotides, which are then degraded further into small acid-soluble oligonucleotides. The protein is Exodeoxyribonuclease 7 small subunit of Photobacterium profundum (strain SS9).